The primary structure comprises 360 residues: 3-isopropylmalate dehydrogenase (360 aa).

Position 76–89 (76–89 (GPKWDKIERDIRPE)) interacts with NAD(+). The substrate site is built by R96, R106, R134, and D224. Mg(2+) is bound by residues D224, D248, and D252. 282 to 294 (GSAPDIAGLGIAN) serves as a coordination point for NAD(+).

It belongs to the isocitrate and isopropylmalate dehydrogenases family. LeuB type 1 subfamily. Homodimer. Requires Mg(2+) as cofactor. The cofactor is Mn(2+).

It is found in the cytoplasm. It carries out the reaction (2R,3S)-3-isopropylmalate + NAD(+) = 4-methyl-2-oxopentanoate + CO2 + NADH. It participates in amino-acid biosynthesis; L-leucine biosynthesis; L-leucine from 3-methyl-2-oxobutanoate: step 3/4. Its function is as follows. Catalyzes the oxidation of 3-carboxy-2-hydroxy-4-methylpentanoate (3-isopropylmalate) to 3-carboxy-4-methyl-2-oxopentanoate. The product decarboxylates to 4-methyl-2 oxopentanoate. This Pseudomonas putida (strain ATCC 47054 / DSM 6125 / CFBP 8728 / NCIMB 11950 / KT2440) protein is 3-isopropylmalate dehydrogenase.